A 202-amino-acid chain; its full sequence is PITH domain-containing protein 1 (202 aa).

Residues 11 to 184 (SHGVDDGIEY…IVNTVYESKP (174 aa)) form the PITH domain.

The protein belongs to the PITHD1 family.

This chain is PITH domain-containing protein 1, found in Dictyostelium discoideum (Social amoeba).